The sequence spans 164 residues: LWamide neuropeptides (164 aa).

A propeptide spanning residues 1-6 is cleaved from the precursor; the sequence is RSADAQ. The interval 1–92 is disordered; the sequence is RSADAQQHGL…WGRSADAQQP (92 aa). Tryptophan 11 and tryptophan 20 each carry tryptophan amide. Positions 23-27 are excised as a propeptide; that stretch reads SADAQ. Tryptophan 32 and tryptophan 41 each carry tryptophan amide. Residues 44-49 constitute a propeptide that is removed on maturation; sequence SAEPGQ. A tryptophan amide mark is found at tryptophan 53 and tryptophan 62. Residues 65-70 constitute a propeptide that is removed on maturation; the sequence is SAEPLQ. 2 positions are modified to tryptophan amide: tryptophan 74 and tryptophan 83. Positions 86–90 are excised as a propeptide; that stretch reads SADAQ. Tryptophan amide is present on residues tryptophan 95, tryptophan 106, and tryptophan 115. Positions 118–123 are excised as a propeptide; it reads SADPGQ. 2 positions are modified to tryptophan amide: tryptophan 127 and tryptophan 137. The propeptide occupies 140-164; the sequence is SYEPPQFEDLEDLKKKSAIPKPSEQ.

Belongs to the LWamide neuropeptide family.

It localises to the secreted. Metamorphosin A may be part of an internal signaling system involved in control of metamorphosis. The chain is LWamide neuropeptides from Actinia equina (Beadlet anemone).